Here is a 431-residue protein sequence, read N- to C-terminus: NADH-quinone oxidoreductase subunit D 2 (431 aa).

The segment at 1-27 is disordered; that stretch reads MNDHKGLGGLDTEATPGSFGAGEPPRA.

It belongs to the complex I 49 kDa subunit family. NDH-1 is composed of 14 different subunits. Subunits NuoB, C, D, E, F, and G constitute the peripheral sector of the complex.

The protein localises to the cell inner membrane. The enzyme catalyses a quinone + NADH + 5 H(+)(in) = a quinol + NAD(+) + 4 H(+)(out). NDH-1 shuttles electrons from NADH, via FMN and iron-sulfur (Fe-S) centers, to quinones in the respiratory chain. The immediate electron acceptor for the enzyme in this species is believed to be ubiquinone. Couples the redox reaction to proton translocation (for every two electrons transferred, four hydrogen ions are translocated across the cytoplasmic membrane), and thus conserves the redox energy in a proton gradient. In Anaeromyxobacter sp. (strain Fw109-5), this protein is NADH-quinone oxidoreductase subunit D 2.